An 833-amino-acid polypeptide reads, in one-letter code: V-type proton ATPase 116 kDa subunit a 4 (833 aa).

Residues 1–390 (MASVFRSEEM…DAYGVGSYRE (390 aa)) lie on the Cytoplasmic side of the membrane. A helical transmembrane segment spans residues 391-409 (INPAPYTIITFPFLFAVMF). Residues 410-411 (GD) lie on the Vacuolar side of the membrane. Residues 412 to 428 (CGHGMVMLMAALWMVLN) form a helical membrane-spanning segment. The Cytoplasmic segment spans residues 429-443 (ERHLLAQKSTNEMWN). The helical transmembrane segment at 444–473 (IFFNGRYLILLMGIFSIYTGLIYNDCFSKS) threads the bilayer. Residues 474–538 (FNIFGSSWSV…ASNKLTFLNS (65 aa)) are Vacuolar-facing. The helical transmembrane segment at 539 to 558 (YKMKMSVILGIAHMIFGVIL) threads the bilayer. Residues 559–576 (SLFNHIYFRRTLNIILQF) lie on the Cytoplasmic side of the membrane. Residues 577 to 597 (IPEMIFMLSLFGYLVFMIIFK) traverse the membrane as a helical segment. Over 598 to 642 (WCRYDAHTSRKAPSILIHFIGMFLFDYDDSSNAPLYGHQQEVQTF) the chain is Vacuolar. Residues 643–662 (FVIIALVSVPWMLLIKPFVL) traverse the membrane as a helical segment. Over 663 to 720 (RAKHQKSQLQSFTIHEDAVEGDHSGHSSKKTAGAHGMKDGHEEEFNFGDIFVHQAIHT) the chain is Cytoplasmic. The segment at 681–700 (VEGDHSGHSSKKTAGAHGMK) is disordered. The chain crosses the membrane as a helical span at residues 721–745 (IEYCLGCISNTASYLRLWALSLAHA). Over 746–766 (ELSEVLWTMVMSIGLRLQGWA) the chain is Vacuolar. A helical transmembrane segment spans residues 767–805 (GLVGVFIIFAVFAVLTVAILLVMEGLSAFLHALRLHWVE). Over 806–833 (FQNKFYEGAGSKFSPFSFKHVLEGTAEE) the chain is Cytoplasmic.

It belongs to the V-ATPase 116 kDa subunit family. V-ATPase is a heteromultimeric enzyme made up of two complexes: the ATP-hydrolytic V1 complex and the proton translocation V0 complex. The V1 complex consists of three catalytic AB heterodimers that form a heterohexamer, three peripheral stalks each consisting of EG heterodimers, one central rotor including subunits D and F, and the regulatory subunits C and H. The proton translocation complex V0 consists of the proton transport subunit a, a ring of proteolipid subunits c9c'', rotary subunit d, subunits e and f, and the accessory subunits ATP6AP1/Ac45 and ATP6AP2/PRR. Interacts with the V1 complex V-ATPase subunit A ATP6V1A. Interacts with the V0 complex V-ATPase subunit c ATP6V0C. As to expression, specifically expressed in kidney, but not in the heart, brain, spleen, lung, liver, muscle, or testis. Distribution within the kidney appears more widespread than that seen in man. High intensity staining at the surface of intercalated cells, with additional expression in the proximal tubule.

The protein localises to the apical cell membrane. It localises to the basolateral cell membrane. In terms of biological role, subunit of the V0 complex of vacuolar(H+)-ATPase (V-ATPase), a multisubunit enzyme composed of a peripheral complex (V1) that hydrolyzes ATP and a membrane integral complex (V0) that translocates protons. V-ATPase is responsible for acidifying and maintaining the pH of intracellular compartments and in some cell types, is targeted to the plasma membrane, where it is responsible for acidifying the extracellular environment. Involved in normal vectorial acid transport into the urine by the kidney. This Mus musculus (Mouse) protein is V-type proton ATPase 116 kDa subunit a 4 (Atp6v0a4).